A 1604-amino-acid polypeptide reads, in one-letter code: MLLHLCSVKNLYQNRFLGLAAMASPSRNSQSRRRCKEPLRYSYNPDQFHNIDIRNGAHDAITIPRSTSDTDLVTSDSRSTLMVSSSYYSIGHSQDLVIHWDIKEEVDAGDWIGMYLIGEVSSENFLDYKNRGVNGSHRGQIIWKIDASSYFVESETKICFKYYHGVSGALRATTPSVTVKNSAAPIFKGIGSEETAQSQGSRRLISFSLSDFQAMGLKKGMFFNPDPYLKISIQPGKHSIFPALPHHGQERRSTIIGNTVNPIWQAEHFSFVSLPTDVLEIEVKDKFAKSRPIIKRFLGKLSMPVQRLLERHAIGDRVVSYTLGRRLPTDHVSGQLQFRFEITSSIHADDEEISLSAEPESSAETQDSIMNSMVGNSNGEPSGDATEFCKDAKPESPSEGNGVNSSENQNQEHAGPVEEAAGAMEARDGSNVSEAPEEPGELQDPEQHDTQPTLSAEEVAEGLPLDEDSPSSLLPEENTALGSKVEEETVPENGAREEEMQKGKDEEEEEEDVSTLEQGEPGLELRVSVRKKSRPCSLPVSELETVIASACGDAETPRTHYIRIHTLLHSMPSAQRGSTTEEEDGLEEESTLKESSEKDGLSEVDTIAADPQSMEDGESDGATLCMAPSDCSGGHFSSLSKGIGAGQDGEAHPSTGSESDSSPQQGADHSCEGCDASCCSPSCYSTSCYSSSCYSSSCYSSSCYNGNNRFASHTRFSSVDSAKISESTVFSSQEDEEEENSAFESVPDSVQSPELDPESTNGAGPWQDELAAPGGNAARSTEGLESPMAGPSNRREGECPILHNSQPISQLPSLRPEHHHYPTIDEPLPPNWEARIDSHGRVFYVDHINRTTTWQRPSMAPTPDGMIRSGSVHQMEQLNRRYQNIQRTMATERAEEDSGNQNSEQIPDGGGGGGGGSDSEAESSQSSLDLRREGSLSPVNSQKVTLLLQSPAVKFITNPEFFTVLHANYSAYRVFTSSTCLKHMILKVRRDARNFERYQHNRDLVNFINMFADTRLELPRGWEIKTDHQGKSFFVDHNSRATTFIDPRIPLQNGRLPNHLTHRQHLQRLRSYSAGEASEVSRNRGASLLARPGHSLIAAIRSQHQHESLPLAYNDKIVAFLRQPNIFEMLQERQPSLARNHTLREKIHYIRTEGNHGLDKLSCDADLVILLSLFEEEIMSYVPLQSAFHPGYSFSPRCSPCSSPQNSPGLQRASARAPSPYRRDFEAKLRNFYRKLEAKGFGQGPGKIKLIIRRDHLLEGTFNQVMAYSRKELQRNKLYITFVGEEGLDYSGPSREFFFLLSQELFNPYYGLFEYSANDTYTVQISPMSAFVENYLEWFRFSGRILGLALIHQYLLDAFFTRPFYKGLLKLPCDLSDLEYLDEEFHQSLQWMKDNNITDILDLTFTVNEEVFGQVTERELKSGGANTQVTEKNKKEYIERMVKWRVERGVVQQTEALLRGFYEVVDSRLVSVFDARELELVIAGTAEIDLNDWRNNTEYRGGYHDGHLVIRWFWAAVERFNNEQRLRLLQFVTGTSSVPYEGFAALRGSNGLRRFCIEKWGKITSLPRAHTCFNRLDLPPYPSYSMLYEKLLTAVEETSTFGLE.

One can recognise a C2 domain in the interval 182-318; it reads SAAPIFKGIG…LERHAIGDRV (137 aa). 4 disordered regions span residues 350-539, 572-604, 642-667, and 727-826; these read DEEI…CSLP, PSAQ…LSEV, GIGA…QQGA, and STVF…TIDE. Over residues 362–380 the composition is skewed to polar residues; it reads SAETQDSIMNSMVGNSNGE. Basic and acidic residues predominate over residues 387–396; it reads EFCKDAKPES. The segment covering 398–412 has biased composition (polar residues); it reads SEGNGVNSSENQNQE. Composition is skewed to acidic residues over residues 435–444 and 458–469; these read APEEPGELQD and EVAEGLPLDEDS. Residues 494–505 are compositionally biased toward basic and acidic residues; sequence GAREEEMQKGKD. Acidic residues predominate over residues 580–589; it reads TEEEDGLEEE. Residues 590–601 are compositionally biased toward basic and acidic residues; the sequence is STLKESSEKDGL. Composition is skewed to polar residues over residues 654 to 667, 748 to 762, and 803 to 812; these read STGS…QQGA, DSVQ…STNG, and HNSQPISQLP. A WW 1 domain is found at 826–859; sequence EPLPPNWEARIDSHGRVFYVDHINRTTTWQRPSM. Residue Ser871 is modified to Phosphoserine. Residues 871–898 are a coiled coil; sequence SVHQMEQLNRRYQNIQRTMATERAEEDS. The segment at 890–936 is disordered; the sequence is ATERAEEDSGNQNSEQIPDGGGGGGGGSDSEAESSQSSLDLRREGSL. Gly residues predominate over residues 908-917; the sequence is DGGGGGGGGS. Phosphoserine occurs at positions 935 and 937. Positions 1016 to 1049 constitute a WW 2 domain; the sequence is LELPRGWEIKTDHQGKSFFVDHNSRATTFIDPRI. The HECT domain occupies 1269–1604; sequence SRKELQRNKL…VEETSTFGLE (336 aa). The Glycyl thioester intermediate role is filled by Cys1572.

As to quaternary structure, interacts with DVL1 and SSR3. As to expression, predominantly expressed in neurons of the spinal cord.

Its subcellular location is the cytoplasm. The catalysed reaction is S-ubiquitinyl-[E2 ubiquitin-conjugating enzyme]-L-cysteine + [acceptor protein]-L-lysine = [E2 ubiquitin-conjugating enzyme]-L-cysteine + N(6)-ubiquitinyl-[acceptor protein]-L-lysine.. It participates in protein modification; protein ubiquitination. E3 ubiquitin-protein ligase that mediates ubiquitination and subsequent degradation of DVL1. This Mus musculus (Mouse) protein is E3 ubiquitin-protein ligase HECW1 (Hecw1).